The chain runs to 136 residues: MLAPKKQKFRKAHKGRVASKAKAGTMLAFGSFGLKSIDGWRVTARQIEAGRKAATRCMKRQGRLWIRIFPDVPVSKKPAEVRMGKGKGSPEFFAVRVSPGKIMFEIEGVEENIALRALELASAKLPVRTRIVRRYE.

It belongs to the universal ribosomal protein uL16 family. Part of the 50S ribosomal subunit.

Functionally, binds 23S rRNA and is also seen to make contacts with the A and possibly P site tRNAs. The sequence is that of Large ribosomal subunit protein uL16 from Rickettsia akari (strain Hartford).